The sequence spans 386 residues: Patatin group M-1 (386 aa).

A signal peptide spans 1–23 (MATTKSFLILFFMILATTSSTCA). Residues 32 to 229 (LSIDGGGIKG…TVGDPALLSL (198 aa)) form the PNPLA domain. Residues 36-41 (GGGIKG) carry the GXGXXG motif. Residues 75 to 79 (GTSTG) carry the GXSXG motif. The Nucleophile role is filled by Ser-77. N-linked (GlcNAc...) asparagine glycosylation is present at Asn-115. Asp-215 acts as the Proton acceptor in catalysis. The short motif at 215–217 (DGG) is the DGA/G element.

Belongs to the patatin family. In terms of tissue distribution, tuber.

The protein localises to the vacuole. Probable lipolytic acyl hydrolase (LAH), an activity which is thought to be involved in the response of tubers to pathogens. In Solanum tuberosum (Potato), this protein is Patatin group M-1.